Here is a 195-residue protein sequence, read N- to C-terminus: Molybdopterin synthase catalytic subunit (195 aa).

The interval 1–37 (MSARPEPQPGSERNATEPLPSHLDPTTYPRTLTTTHG) is disordered. Low complexity predominate over residues 25–37 (PTTYPRTLTTTHG). Substrate contacts are provided by residues 141-142 (HR), K157, and 164-166 (KRE).

It belongs to the MoaE family. MOCS2B subfamily. As to quaternary structure, heterotetramer; composed of 2 small (MOCS2A) and 2 large (MOCS2B) subunits.

Its subcellular location is the cytoplasm. It carries out the reaction 2 [molybdopterin-synthase sulfur-carrier protein]-C-terminal-Gly-aminoethanethioate + cyclic pyranopterin phosphate + H2O = molybdopterin + 2 [molybdopterin-synthase sulfur-carrier protein]-C-terminal Gly-Gly + 2 H(+). It functions in the pathway cofactor biosynthesis; molybdopterin biosynthesis. Catalytic subunit of the molybdopterin synthase complex, a complex that catalyzes the conversion of precursor Z into molybdopterin. Acts by mediating the incorporation of 2 sulfur atoms from thiocarboxylated MOCS2A into precursor Z to generate a dithiolene group. The sequence is that of Molybdopterin synthase catalytic subunit from Emericella nidulans (strain FGSC A4 / ATCC 38163 / CBS 112.46 / NRRL 194 / M139) (Aspergillus nidulans).